We begin with the raw amino-acid sequence, 275 residues long: Bis(5'-nucleosyl)-tetraphosphatase, symmetrical (275 aa).

This sequence belongs to the Ap4A hydrolase family.

The catalysed reaction is P(1),P(4)-bis(5'-adenosyl) tetraphosphate + H2O = 2 ADP + 2 H(+). Hydrolyzes diadenosine 5',5'''-P1,P4-tetraphosphate to yield ADP. The sequence is that of Bis(5'-nucleosyl)-tetraphosphatase, symmetrical from Photorhabdus laumondii subsp. laumondii (strain DSM 15139 / CIP 105565 / TT01) (Photorhabdus luminescens subsp. laumondii).